Reading from the N-terminus, the 964-residue chain is Probable LRR receptor-like serine/threonine-protein kinase IRK (964 aa).

An N-terminal signal peptide occupies residues 1–20 (MYKALIFTVLLVSAVAPVRS). Topologically, residues 21–603 (LDPPLNDDVL…GHKRILLSIS (583 aa)) are extracellular. LRR repeat units lie at residues 92 to 116 (LQFLHKLSLSNNNLTGIINPNMLLS), 117 to 141 (LVNLKVVDLSSNGLSGSLPDEFFRQ), 143 to 166 (GSLRVLSLAKNKLTGKIPVSISSC), 168 to 190 (SLAALNLSSNGFSGSMPLGIWSL), 191 to 214 (NTLRSLDLSRNELEGEFPEKIDRL), 215 to 238 (NNLRALDLSRNRLSGPIPSEIGSC), 240 to 261 (LLKTIDLSENSLSGSLPNTFQQ), 263 to 286 (SLCYSLNLGKNALEGEVPKWIGEM), 287 to 310 (RSLETLDLSMNKFSGQVPDSIGNL), 312 to 334 (ALKVLNFSGNGLIGSLPVSTANC), and 335 to 358 (INLLALDLSGNSLTGKLPMWLFQD). Asn104 is a glycosylation site (N-linked (GlcNAc...) asparagine). An N-linked (GlcNAc...) asparagine glycan is attached at Asn173. An N-linked (GlcNAc...) asparagine glycan is attached at Asn317. The N-linked (GlcNAc...) asparagine glycan is linked to Asn370. LRR repeat units lie at residues 375–399 (IKKIQVLDLSHNAFSGEIGAGLGDL), 400–423 (RDLEGLHLSRNSLTGPIPSTIGEL), 425–447 (HLSVLDVSHNQLNGMIPRETGGA), 448–471 (VSLEELRLENNLLEGNIPSSIKNC), 472–495 (SSLRSLILSHNKLLGSIPPELAKL), 496–519 (TRLEEVDLSFNELAGTLPKQLANL), and 521–544 (YLHTFNISHNHLFGELPAGGIFNG). N-linked (GlcNAc...) asparagine glycosylation occurs at Asn470. Asn526, Asn562, and Asn578 each carry an N-linked (GlcNAc...) asparagine glycan. The chain crosses the membrane as a helical span at residues 604–624 (SLIAISAAAAIVVGVIAITVL). At 625–964 (NLRVRASTVS…SGSSDELGSS (340 aa)) the chain is on the cytoplasmic side. Residues 678–951 (LNKDCELGRG…GEAVNILRMI (274 aa)) form the Protein kinase domain. Residues 684–692 (LGRGGFGAV) and Lys706 contribute to the ATP site.

This sequence belongs to the protein kinase superfamily. Ser/Thr protein kinase family. As to quaternary structure, interacts with IRKI. In terms of processing, autophosphorylated. Highly expressed in root tips, shoot apices and developing flowers.

It is found in the cell membrane. It carries out the reaction L-seryl-[protein] + ATP = O-phospho-L-seryl-[protein] + ADP + H(+). The enzyme catalyses L-threonyl-[protein] + ATP = O-phospho-L-threonyl-[protein] + ADP + H(+). The chain is Probable LRR receptor-like serine/threonine-protein kinase IRK from Arabidopsis thaliana (Mouse-ear cress).